The sequence spans 260 residues: MVLIRVLANLLILQLSYAQKSSELVIGGDECNINEHRFLVALYDPDRFLCSGILLNEEWVLTAAHCDRRNIRIKLGMHSKTVPNEDEQTRVPKEKFFCLSSKNYTLWDKDIMLIRLDSPVSNSEHIAPLSLPSSPPSVGSVCRIMGWGRISPSKETYPDVPHCANINLLDYEVCLAAYPEFGLPATSKTLCAGILEGGKDTCVGDSGGPLICNGQFQGILSWGNDVCGYILQPALYTRVFDHLDWIQSIIAGNTDVTCPP.

The N-terminal stretch at 1 to 18 is a signal peptide; sequence MVLIRVLANLLILQLSYA. Residues 19–24 constitute a propeptide that is removed on maturation; the sequence is QKSSEL. Residues 25-251 form the Peptidase S1 domain; the sequence is VIGGDECNIN…HLDWIQSIIA (227 aa). 6 disulfide bridges follow: C31–C163, C50–C66, C98–C258, C142–C212, C174–C191, and C202–C227. H65 functions as the Charge relay system in the catalytic mechanism. N-linked (GlcNAc...) asparagine glycosylation occurs at N103. D110 (charge relay system) is an active-site residue. The Charge relay system role is filled by S206.

Belongs to the peptidase S1 family. Snake venom subfamily. As to quaternary structure, monomer. In terms of tissue distribution, expressed by the venom gland.

It localises to the secreted. Its function is as follows. Snake venom serine protease that may act in the hemostasis system of the prey. The protein is Snake venom serine proteinase 12 of Crotalus adamanteus (Eastern diamondback rattlesnake).